A 126-amino-acid polypeptide reads, in one-letter code: Large ribosomal subunit protein bL20c (126 aa).

It belongs to the bacterial ribosomal protein bL20 family.

Its subcellular location is the plastid. The protein localises to the chloroplast. Its function is as follows. Binds directly to 23S ribosomal RNA and is necessary for the in vitro assembly process of the 50S ribosomal subunit. It is not involved in the protein synthesizing functions of that subunit. In Lactuca sativa (Garden lettuce), this protein is Large ribosomal subunit protein bL20c.